A 193-amino-acid chain; its full sequence is Large ribosomal subunit protein uL5 (193 aa).

The protein belongs to the universal ribosomal protein uL5 family. As to quaternary structure, part of the 50S ribosomal subunit; part of the 5S rRNA/L5/L18/L25 subcomplex. Contacts the 5S rRNA and the P site tRNA. Forms a bridge to the 30S subunit in the 70S ribosome.

Its function is as follows. This is one of the proteins that bind and probably mediate the attachment of the 5S RNA into the large ribosomal subunit, where it forms part of the central protuberance. In the 70S ribosome it contacts protein S13 of the 30S subunit (bridge B1b), connecting the 2 subunits; this bridge is implicated in subunit movement. Contacts the P site tRNA; the 5S rRNA and some of its associated proteins might help stabilize positioning of ribosome-bound tRNAs. This Corynebacterium urealyticum (strain ATCC 43042 / DSM 7109) protein is Large ribosomal subunit protein uL5.